Reading from the N-terminus, the 164-residue chain is Large ribosomal subunit protein uL10 (164 aa).

The protein belongs to the universal ribosomal protein uL10 family. In terms of assembly, part of the ribosomal stalk of the 50S ribosomal subunit. The N-terminus interacts with L11 and the large rRNA to form the base of the stalk. The C-terminus forms an elongated spine to which L12 dimers bind in a sequential fashion forming a multimeric L10(L12)X complex.

In terms of biological role, forms part of the ribosomal stalk, playing a central role in the interaction of the ribosome with GTP-bound translation factors. This chain is Large ribosomal subunit protein uL10 (rplJ), found in Helicobacter pylori (strain J99 / ATCC 700824) (Campylobacter pylori J99).